Reading from the N-terminus, the 224-residue chain is MMLITTSHRPTRRTRSFGHDLERVIPNSLYLTRGKKTIQELLMEAYDRGYERLLIINVWKGNPLKMTFIKVHPEDWGYLGYLYLHGVKLQREMGFKGLNPIREDMPLVITTAKRVGLDHLAFAQVFSELTTGKFVPRGDKSLLSIADRYNTDVLAVIERHPRGIVINFYRLDITKDRPVGPLINVKIWIMEDGRRWDYKEAFGIKVPPRRREFEGKRGEGKNSD.

The Brix domain occupies Met-1–Trp-196.

Probably involved in the biogenesis of the ribosome. In Pyrococcus horikoshii (strain ATCC 700860 / DSM 12428 / JCM 9974 / NBRC 100139 / OT-3), this protein is Probable Brix domain-containing ribosomal biogenesis protein.